A 122-amino-acid polypeptide reads, in one-letter code: Flagellar hook-basal body complex protein FliE (122 aa).

This sequence belongs to the FliE family.

The protein resides in the bacterial flagellum basal body. In Marinobacter nauticus (strain ATCC 700491 / DSM 11845 / VT8) (Marinobacter aquaeolei), this protein is Flagellar hook-basal body complex protein FliE.